Here is a 445-residue protein sequence, read N- to C-terminus: Exodeoxyribonuclease 7 large subunit (445 aa).

This sequence belongs to the XseA family. Heterooligomer composed of large and small subunits.

It is found in the cytoplasm. It carries out the reaction Exonucleolytic cleavage in either 5'- to 3'- or 3'- to 5'-direction to yield nucleoside 5'-phosphates.. In terms of biological role, bidirectionally degrades single-stranded DNA into large acid-insoluble oligonucleotides, which are then degraded further into small acid-soluble oligonucleotides. This Staphylococcus epidermidis (strain ATCC 12228 / FDA PCI 1200) protein is Exodeoxyribonuclease 7 large subunit.